The sequence spans 405 residues: 11-beta-hydroxysteroid dehydrogenase type 2 (405 aa).

82 to 111 provides a ligand contact to NAD(+); the sequence is TRAVLITGCDSGFGKETAKKLDSMGFTVLA. Ser-219 is a binding site for substrate. The active-site Proton acceptor is the Tyr-232. An essential for protein stability region spans residues 335-339; that stretch reads RRRYY. The span at 377 to 387 shows a compositional bias: low complexity; that stretch reads QPGQPGTTPPQ. Residues 377–405 are disordered; sequence QPGQPGTTPPQDAAQDPNLSPGPSPAVAR. Pro residues predominate over residues 396 to 405; it reads SPGPSPAVAR.

Belongs to the short-chain dehydrogenases/reductases (SDR) family. As to quaternary structure, interacts with ligand-free cytoplasmic NR3C2. Expressed in kidney, placenta, pancreas, prostate, ovary, small intestine and colon, and in lower levels in the spleen and testis. At midgestation, expressed at high levels in placenta and in fetal kidney and, at much lower levels, in fetal lung and testis.

It is found in the microsome. The protein resides in the endoplasmic reticulum. The enzyme catalyses an 11beta-hydroxysteroid + NAD(+) = an 11-oxosteroid + NADH + H(+). The catalysed reaction is cortisol + NAD(+) = cortisone + NADH + H(+). It catalyses the reaction corticosterone + NAD(+) = 11-dehydrocorticosterone + NADH + H(+). It carries out the reaction 11beta,17beta-dihydroxyandrost-4-ene-3-one + NAD(+) = 17beta-hydroxyandrost-4-ene-3,11-dione + NADH + H(+). The enzyme catalyses 11beta-hydroxyandrost-4-ene-3,17-dione + NAD(+) = androst-4-ene-3,11,17-trione + NADH + H(+). It participates in steroid metabolism. Inhibited by glycyrrhetinic acid (derived from liquorice). Functionally, catalyzes the conversion of biologically active 11beta-hydroxyglucocorticoids (11beta-hydroxysteroid) such as cortisol, to inactive 11-ketoglucocorticoids (11-oxosteroid) such as cortisone, in the presence of NAD(+). Functions as a dehydrogenase (oxidase), thereby decreasing the concentration of active glucocorticoids, thus protecting the nonselective mineralocorticoid receptor from occupation by glucocorticoids. Plays an important role in maintaining glucocorticoids balance during preimplantation and protects the fetus from excessive maternal corticosterone exposure. Catalyzes the oxidation of 11beta-hydroxytestosterone (11beta,17beta-dihydroxyandrost-4-ene-3-one) to 11-ketotestosterone (17beta-hydroxyandrost-4-ene-3,11-dione), a major bioactive androgen. Catalyzes the conversion of 11beta-hydroxyandrostenedione (11beta-hydroxyandrost-4-ene-3,17-dione) to 11-ketoandrostenedione (androst-4-ene-3,11,17-trione), which can be further metabolized to 11-ketotestosterone. Converts 7-beta-25-dihydroxycholesterol to 7-oxo-25-hydroxycholesterol in vitro. 7-beta-25-dihydroxycholesterol (not 7-oxo-25-hydroxycholesterol) acts as a ligand for the G-protein-coupled receptor (GPCR) Epstein-Barr virus-induced gene 2 (EBI2) and may thereby regulate immune cell migration. May protect ovulating oocytes and fertilizing spermatozoa from the adverse effects of cortisol. This Homo sapiens (Human) protein is 11-beta-hydroxysteroid dehydrogenase type 2.